The sequence spans 617 residues: pH-sensitive chloride channel 2 (617 aa).

A signal peptide spans 1–28; sequence MHSPGAAAYVFLQCLVALVAAVIAQSGA. The Extracellular segment spans residues 29–387; the sequence is DQPPTTVVEV…VHLAREMGFY (359 aa). A glycan (N-linked (GlcNAc...) asparagine) is linked at Asn-57. The span at 82 to 96 shows a compositional bias: low complexity; that stretch reads TVSVDSSSTTTVAST. The segment at 82–110 is disordered; it reads TVSVDSSSTTTVASTQEPTSTTERTMSPE. Residues 97–106 show a composition bias toward polar residues; sequence QEPTSTTERT. Asn-130 carries an N-linked (GlcNAc...) asparagine glycan. Positions 131 to 147 are enriched in basic and acidic residues; sequence ATDDNRPDAKSSGKDSE. Residues 131-155 are disordered; it reads ATDDNRPDAKSSGKDSECPTLEGAD. N-linked (GlcNAc...) asparagine glycans are attached at residues Asn-184, Asn-234, Asn-351, and Asn-370. The chain crosses the membrane as a helical span at residues 388 to 408; sequence MMDYFIPSIMLVAISWVTFWL. Topologically, residues 409-414 are cytoplasmic; sequence QADQSA. The chain crosses the membrane as a helical span at residues 415 to 434; it reads PRITLGTSTMLTFITLASAQ. At 435 to 447 the chain is on the extracellular side; it reads GKTLPKVSYIKAS. The chain crosses the membrane as a helical span at residues 448–468; that stretch reads EIWFLGCTGFIFGSLVEFAFV. Over 469 to 596 the chain is Cytoplasmic; the sequence is NTIWRRKRNV…VAIWIDKRSR (128 aa). The helical transmembrane segment at 597–617 threads the bilayer; that stretch reads FVFPIAFVIFNIFYWTFVYYV.

Belongs to the ligand-gated ion channel (TC 1.A.9) family.

Its subcellular location is the cell membrane. It catalyses the reaction chloride(in) = chloride(out). Functionally, ligand and pH-gated channel that mediates chloride transport in the mid-gut and thereby may function in larval metabolism and fluid homeostasis. Channel opening is triggered by zinc binding or, to a lesser extent, an increase in extracellular pH. In Anopheles gambiae (African malaria mosquito), this protein is pH-sensitive chloride channel 2.